A 438-amino-acid chain; its full sequence is Transmembrane protein 184C (438 aa).

The next 7 helical transmembrane spans lie at 17-37 (LVAV…VWEL), 48-68 (AWFI…WVIL), 86-106 (ILWM…YPGI), 179-199 (YTVV…LGIY), 212-232 (YLVI…LLFY), 254-274 (VVFV…VGVI), and 287-307 (AVAT…AAIA). A disordered region spans residues 358-438 (PRKKLFPEDQ…KEPSDKSVDS (81 aa)). 2 stretches are compositionally biased toward low complexity: residues 374–390 (SLLS…ASSM) and 404–413 (TVTPQTTPTT). The residue at position 422 (serine 422) is a Phosphoserine. Residues 425–438 (IGEKKEPSDKSVDS) show a composition bias toward basic and acidic residues.

This sequence belongs to the TMEM184 family.

It localises to the membrane. In terms of biological role, possible tumor suppressor which may play a role in cell growth. The chain is Transmembrane protein 184C (TMEM184C) from Pongo abelii (Sumatran orangutan).